We begin with the raw amino-acid sequence, 266 residues long: Hydroxyethylthiazole kinase (266 aa).

Met43 provides a ligand contact to substrate. Residues Arg119 and Thr166 each contribute to the ATP site. Residue Gly193 coordinates substrate.

Belongs to the Thz kinase family. Mg(2+) serves as cofactor.

It catalyses the reaction 5-(2-hydroxyethyl)-4-methylthiazole + ATP = 4-methyl-5-(2-phosphooxyethyl)-thiazole + ADP + H(+). It functions in the pathway cofactor biosynthesis; thiamine diphosphate biosynthesis; 4-methyl-5-(2-phosphoethyl)-thiazole from 5-(2-hydroxyethyl)-4-methylthiazole: step 1/1. In terms of biological role, catalyzes the phosphorylation of the hydroxyl group of 4-methyl-5-beta-hydroxyethylthiazole (THZ). This is Hydroxyethylthiazole kinase from Methanococcus maripaludis (strain C5 / ATCC BAA-1333).